We begin with the raw amino-acid sequence, 253 residues long: Small ribosomal subunit protein uS3 (253 aa).

In terms of domain architecture, KH type-2 spans 38–106; sequence IRKYIHARLS…EVQINIFEIK (69 aa). Residues 216 to 253 form a disordered region; that stretch reads AGMDKKQAGQGGGKGGDSPRGDRKPFNKGGKPDARKRK. Residues 232-253 show a composition bias toward basic and acidic residues; the sequence is DSPRGDRKPFNKGGKPDARKRK.

Belongs to the universal ribosomal protein uS3 family. Part of the 30S ribosomal subunit. Forms a tight complex with proteins S10 and S14.

Binds the lower part of the 30S subunit head. Binds mRNA in the 70S ribosome, positioning it for translation. The polypeptide is Small ribosomal subunit protein uS3 (Flavobacterium psychrophilum (strain ATCC 49511 / DSM 21280 / CIP 103535 / JIP02/86)).